A 401-amino-acid polypeptide reads, in one-letter code: NADH-quinone oxidoreductase subunit D (401 aa).

The protein belongs to the complex I 49 kDa subunit family. NDH-1 is composed of 14 different subunits. Subunits NuoB, C, D, E, F, and G constitute the peripheral sector of the complex.

The protein resides in the cell inner membrane. The enzyme catalyses a quinone + NADH + 5 H(+)(in) = a quinol + NAD(+) + 4 H(+)(out). NDH-1 shuttles electrons from NADH, via FMN and iron-sulfur (Fe-S) centers, to quinones in the respiratory chain. The immediate electron acceptor for the enzyme in this species is believed to be ubiquinone. Couples the redox reaction to proton translocation (for every two electrons transferred, four hydrogen ions are translocated across the cytoplasmic membrane), and thus conserves the redox energy in a proton gradient. In Rhodopseudomonas palustris (strain HaA2), this protein is NADH-quinone oxidoreductase subunit D.